We begin with the raw amino-acid sequence, 67 residues long: MKLLLLTLAALLLVSQLTPGDAQKCWNLHGKCRHRCSRKESVYVYCTNGKMCCVKPKYQPKPKPWMF.

The N-terminal stretch at 1–22 is a signal peptide; it reads MKLLLLTLAALLLVSQLTPGDA. 3 disulfide bridges follow: Cys-25–Cys-52, Cys-32–Cys-46, and Cys-36–Cys-53.

This sequence belongs to the beta-defensin family.

It localises to the secreted. In terms of biological role, has antibacterial activity. This chain is Beta-defensin 36 (Defb36), found in Mus musculus (Mouse).